Reading from the N-terminus, the 56-residue chain is UPF0434 protein CBUD_1597.1 (56 aa).

The protein belongs to the UPF0434 family.

In Coxiella burnetii (strain Dugway 5J108-111), this protein is UPF0434 protein CBUD_1597.1.